The sequence spans 293 residues: uncharacterized protein (293 aa).

2 disordered regions span residues 1 to 95 and 268 to 293; these read MFLR…KDKA and EETA…GRAL. Ser34, Ser35, and Ser89 each carry phosphoserine. Basic and acidic residues-rich tracts occupy residues 85–95 and 277–286; these read KRMDSLKKDKA and GQGKEAKEQT.

This is an uncharacterized protein from Rattus norvegicus (Rat).